We begin with the raw amino-acid sequence, 669 residues long: Coagulation factor XIII B chain (669 aa).

Positions 1–21 (MMTLRHLPFILLLILSGELYA) are cleaved as a signal peptide. 10 Sushi domains span residues 25 to 89 (QCDF…PRCY), 90 to 149 (KKCL…SCRK), 152 to 211 (ETCL…QCNK), 212 to 270 (LMCS…ICEG), 273 to 330 (NRCP…KCIE), 335 to 392 (VACE…ECVE), 395 to 453 (ENCK…VCLE), 454 to 517 (PCTI…PMCI), 523 to 581 (GMCA…SCLE), and 582 to 648 (PCTL…PKCT). Disulfide bonds link Cys26–Cys77, Cys60–Cys88, Cys92–Cys136, Cys119–Cys147, Cys154–Cys198, Cys181–Cys209, Cys214–Cys256, Cys242–Cys268, Cys275–Cys317, Cys303–Cys328, Cys337–Cys379, Cys365–Cys390, Cys397–Cys440, Cys426–Cys451, Cys455–Cys506, Cys487–Cys516, Cys525–Cys568, Cys554–Cys579, Cys583–Cys637, and Cys617–Cys647. Asn163 carries N-linked (GlcNAc...) asparagine glycosylation. Asn546 carries an N-linked (GlcNAc...) asparagine glycan.

In terms of assembly, tetramer of two A chains (F13A1) and two B (F13B) chains. As to expression, predominantly expressed in liver and kidney.

It is found in the secreted. In terms of biological role, the B chain of factor XIII is not catalytically active, but is thought to stabilize the A subunits and regulate the rate of transglutaminase formation by thrombin. The chain is Coagulation factor XIII B chain (F13b) from Mus musculus (Mouse).